The sequence spans 377 residues: RING finger protein 215 (377 aa).

The Cytoplasmic segment spans residues 1–22 (MGPAARPALRSPPPPPPPPPSP). The disordered stretch occupies residues 1–22 (MGPAARPALRSPPPPPPPPPSP). Residues 10-22 (RSPPPPPPPPPSP) show a composition bias toward pro residues. A helical membrane pass occupies residues 23–43 (LLLLLPLLPLWLGLAGPGAAA). Residues 44-250 (DGSEPAAGAG…GGSRAQEQKP (207 aa)) lie on the Extracellular side of the membrane. N-linked (GlcNAc...) asparagine glycosylation is present at Asn186. A helical membrane pass occupies residues 251–271 (LQQLWNAILLVAMLLCTGLVV). Topologically, residues 272-377 (QAQRQASRQS…NVLGNRYSDD (106 aa)) are cytoplasmic. The RING-type; atypical zinc finger occupies 325 to 366 (CAVCLDYFCNKQWLRVLPCKHEFHRDCVDPWLMLQQTCPLCK).

It localises to the membrane. The chain is RING finger protein 215 (RNF215) from Homo sapiens (Human).